Consider the following 62-residue polypeptide: Alpha-conotoxin-like Ca1.1 (62 aa).

A signal peptide spans 1–21 (MGMRMMFTVFLLVVLATTVVS). A propeptide spanning residues 22-46 (FTSDRASDGRNAAANAFDLIALIAR) is cleaved from the precursor. Gln47 bears the Pyrrolidone carboxylic acid mark. 2 disulfides stabilise this stretch: Cys49–Cys55 and Cys50–Cys61.

This sequence belongs to the conotoxin A superfamily. Expressed by the venom duct.

It is found in the secreted. In terms of biological role, alpha-conotoxins act on postsynaptic membranes, they bind to the nicotinic acetylcholine receptors (nAChR) and thus inhibit them. In Conus caracteristicus (Characteristic cone), this protein is Alpha-conotoxin-like Ca1.1.